The sequence spans 642 residues: Polyglycine hydrolase (642 aa).

The signal sequence occupies residues 1 to 23 (MYTSRLLLSNLASCLSLATLVAS). N-linked (GlcNAc...) asparagine glycosylation is found at Asn37, Asn100, Asn159, and Asn341. Cys149 and Cys183 are joined by a disulfide. Ser370 is an active-site residue. 5 N-linked (GlcNAc...) asparagine glycosylation sites follow: Asn390, Asn407, Asn444, Asn487, and Asn494.

It belongs to the peptidase S12 family.

The protein localises to the secreted. The catalysed reaction is a glycyl-glycyl-[protein] + H2O = N-terminal glycyl-[protein] + [protein]-C-terminal glycine. Not inhibited by phenylmethylsulfonyl fluoride (PMSF; serine peptidase class S1 inhibitor), clavulanic acid (beta-lactamase inhibitor) or ampicillin (penicillin-binding protein (PBP) inhibitor). Serine-type endopeptidase that cleaves Gly-Gly bonds in the polyglycine linker of host plant class IV chitinases to disrupt their chitin-binding, and thereby plays a role in lowering the defense responses of the host to the fungus. Degrades Z.mays Endochitinase A (CHIA). Degrades Z.mays Endochitinase B (CHIB). Has no activity on Z.mays CHIA following CHIA cleavage by fungalysin. In Epicoccum sorghinum (Endophyte fungus), this protein is Polyglycine hydrolase.